Consider the following 228-residue polypeptide: MYDVTEWKHVFKLDPNKDLPDEQLEILCESGTDAVIIGGSDGVTEDNVLRMMSKVRRFLVPCVLEVSAIEAIVPGFDLYFIPSVLNSKNADWIVGMHQKAMKEYGELMSMEEIVAEGYCIANPDCKAAALTEADADLNMDDIVAYARVSELLQLPIFYLEYSGVLGDIEAVKKTKAVLETSTLFYGGGIKDAETAKQYAEHADVIVVGNAVYEDFDRALKTVAAVKGE.

Lys-12 contacts sn-glycerol 1-phosphate. The Mg(2+) site is built by Asp-14 and Ser-40. Residues 158 to 163 (YLEYSG), Gly-188, and 208 to 209 (GN) each bind sn-glycerol 1-phosphate.

It belongs to the GGGP/HepGP synthase family. Group I subfamily. Homodimer. It depends on Mg(2+) as a cofactor.

It catalyses the reaction sn-glycerol 1-phosphate + all-trans-heptaprenyl diphosphate = 3-heptaprenyl-sn-glycero-1-phosphate + diphosphate. Its pathway is membrane lipid metabolism; glycerophospholipid metabolism. Functionally, prenyltransferase that catalyzes in vivo the transfer of the heptaprenyl moiety of heptaprenyl pyrophosphate (HepPP; 35 carbon atoms) to the C3 hydroxyl of sn-glycerol-1-phosphate (G1P), producing heptaprenylglyceryl phosphate (HepGP). This reaction is an ether-bond-formation step in the biosynthesis of archaea-type G1P-based membrane lipids found in Bacillales. To a much lesser extent, is also able to use geranyl diphosphate (GPP; C10) and geranylgeranyl diphosphate (GGPP; C20) as the prenyl donors, but not farnesyl pyrophosphate (FPP; C15). Cannot use glycerol-3-phosphate (G3P) or 3-phosphoglycerate (3PG) as an acceptor. This chain is Heptaprenylglyceryl phosphate synthase, found in Bacillus subtilis (strain 168).